The chain runs to 267 residues: Kit ligand (267 aa).

The signal sequence occupies residues methionine 1–threonine 25. Residue glutamine 26 is modified to Pyrrolidone carboxylic acid. Residues glutamine 26–glutamine 215 lie on the Extracellular side of the membrane. Disulfide bonds link cysteine 29–cysteine 114 and cysteine 68–cysteine 164. 4 N-linked (GlcNAc...) asparagine glycosylation sites follow: asparagine 90, asparagine 97, asparagine 145, and asparagine 196. Residues tryptophan 216 to tryptophan 238 form a helical membrane-spanning segment. Residues lysine 239–lysine 267 are Cytoplasmic-facing.

This sequence belongs to the SCF family. As to quaternary structure, homodimer, non-covalently linked. Heterotetramer with KIT, binding two KIT molecules; thereby mediates KIT dimerization and subsequent activation by autophosphorylation. A soluble form is produced by proteolytic processing of the extracellular domain.

The protein resides in the cytoplasm. It is found in the cytoskeleton. The protein localises to the cell membrane. Its subcellular location is the cell projection. It localises to the lamellipodium. The protein resides in the filopodium. It is found in the secreted. Ligand for the receptor-type protein-tyrosine kinase KIT. Plays an essential role in the regulation of cell survival and proliferation, hematopoiesis, stem cell maintenance, gametogenesis, mast cell development, migration and function, and in melanogenesis. KITLG/SCF binding can activate several signaling pathways. Promotes phosphorylation of PIK3R1, the regulatory subunit of phosphatidylinositol 3-kinase, and subsequent activation of the kinase AKT1. KITLG/SCF and KIT also transmit signals via GRB2 and activation of RAS, RAF1 and the MAP kinases MAPK1/ERK2 and/or MAPK3/ERK1. KITLG/SCF and KIT promote activation of STAT family members STAT1, STAT3 and STAT5. KITLG/SCF and KIT promote activation of PLCG1, leading to the production of the cellular signaling molecules diacylglycerol and inositol 1,4,5-trisphosphate. KITLG/SCF acts synergistically with other cytokines, probably interleukins. This Ovis aries (Sheep) protein is Kit ligand (KITLG).